The chain runs to 373 residues: CASP-like protein UU6 (373 aa).

Disordered stretches follow at residues 1 to 100 and 172 to 195; these read MGTL…GSEG and TKET…PKKK. Residues 1-204 lie on the Cytoplasmic side of the membrane; that stretch reads MGTLTDPTVD…KHRLRKHLTA (204 aa). Positions 56–74 are enriched in polar residues; that stretch reads KTNTGNAAESTASTENGET. A helical membrane pass occupies residues 205 to 225; that stretch reads IGAYSFAFRFSETVLSLIAIV. Over 226 to 253 the chain is Extracellular; it reads VMCSTRGSMRTDGVDFGTLKFNHFQAYR. A helical transmembrane segment spans residues 254–274; that stretch reads YLVAVNVIVFVYSTFQFIQLL. Over 275–276 the chain is Cytoplasmic; the sequence is YT. A helical membrane pass occupies residues 277-297; sequence VILGISFIPSIFISTWMTFGF. The Extracellular portion of the chain corresponds to 298–342; sequence DQLFLYLLLSASTSAATVANMSYTGEMGIQLCSRFDVGSFCSKAD. Asn-317 carries N-linked (GlcNAc...) asparagine glycosylation. Residues 343–363 traverse the membrane as a helical segment; sequence VAVTMSFFAVLAMLSSTILAI. At 364 to 373 the chain is on the cytoplasmic side; that stretch reads YRIAVLLREY.

This sequence belongs to the Casparian strip membrane proteins (CASP) family. Homodimer and heterodimers.

The protein localises to the cell membrane. This is CASP-like protein UU6 from Physcomitrium patens (Spreading-leaved earth moss).